Consider the following 428-residue polypeptide: MILMNNPGDKEVLRLLKQRMESVSQVEETVKEIIRRVKEEGDRALEEFLKRFEKHPVGIENLRVTEKEISEAQVEEEFVETIKIVIEDLKEFHRRQEERSFFFTTKGGSFLGEMVVPLESVGIYVPGGKVPYFSTLLMCAVPAIVAGVERIAVTTPPNENGGISPYILKTCEILGLKEIYRMGGAHAVAALTYGTETVKPVDKIVGPGGVFVTLAKKHVYGDVGIDSIAGPSEIAIVTDGSADLDLIAADFLSQAEHDENAMSVVITTSKEVFEKLPQVIERHLEALPEERRKTARISTENFGTIILTDSLKRAFEISNLIAPEHLEVLVENPFEPLGHIKNAGSVFLGKYTCESVGDYGAGPNHVLPTFRSARFSSGLRVSDFTKKIFITHLSEEDFRRKSELYSKMARWEGFEAHARAIDVRREKL.

Positions 232, 254, and 257 each coordinate substrate. 2 residues coordinate Zn(2+): Q254 and H257. Residues E324 and H325 each act as proton acceptor in the active site. Residues H325, D358, E412, and H417 each contribute to the substrate site. Position 358 (D358) interacts with Zn(2+). Position 417 (H417) interacts with Zn(2+).

Belongs to the histidinol dehydrogenase family. Zn(2+) is required as a cofactor.

It catalyses the reaction L-histidinol + 2 NAD(+) + H2O = L-histidine + 2 NADH + 3 H(+). The protein operates within amino-acid biosynthesis; L-histidine biosynthesis; L-histidine from 5-phospho-alpha-D-ribose 1-diphosphate: step 9/9. In terms of biological role, catalyzes the sequential NAD-dependent oxidations of L-histidinol to L-histidinaldehyde and then to L-histidine. The chain is Histidinol dehydrogenase from Thermotoga maritima (strain ATCC 43589 / DSM 3109 / JCM 10099 / NBRC 100826 / MSB8).